Consider the following 131-residue polypeptide: Phosphoribosyl-AMP cyclohydrolase (131 aa).

Asp90 is a binding site for Mg(2+). Cys91 contributes to the Zn(2+) binding site. Mg(2+)-binding residues include Asp92 and Asp94. Zn(2+) contacts are provided by Cys107 and Cys114.

The protein belongs to the PRA-CH family. As to quaternary structure, homodimer. Mg(2+) is required as a cofactor. It depends on Zn(2+) as a cofactor.

Its subcellular location is the cytoplasm. The enzyme catalyses 1-(5-phospho-beta-D-ribosyl)-5'-AMP + H2O = 1-(5-phospho-beta-D-ribosyl)-5-[(5-phospho-beta-D-ribosylamino)methylideneamino]imidazole-4-carboxamide. It participates in amino-acid biosynthesis; L-histidine biosynthesis; L-histidine from 5-phospho-alpha-D-ribose 1-diphosphate: step 3/9. In terms of biological role, catalyzes the hydrolysis of the adenine ring of phosphoribosyl-AMP. This chain is Phosphoribosyl-AMP cyclohydrolase, found in Hyphomonas neptunium (strain ATCC 15444).